A 926-amino-acid chain; its full sequence is MEQNIISTIRDECIRHRSKYLTIAQLTAIAEAKINEFIITGKAKDQDLSSLLDKCIDILSIYKKNSKDIKNIISCKNKGAMISSNSVMIIQLNYVYYKVIHIIVTTNIPHLSEFAKIKLHKSTSDEGNGNNNNNEFQLMNIYNTLLETLLKDENIAKIKSFIKSSIKQTKLNHEQEECNLMRTGSYITSNQLNSLISSSANSASSQMEILLIDIRSRLEFNKSHIDTKNIICLEPISFKMSYSDHDLEKKSLITSPNSEIKMFQSRNLFKFIILYTDANEYNVKQQSVLLDILVNHSFEKPISDDFTKIFILESGFPGWLKSNYGRQVSSSFPSNNNIKDDSVYINGNTSGLSLQHLPKMSPSIRHSMDDSMKEMLVAPTPLNHLQQQQQQQSDNDHVLKRSSSFKKLFSNYTSPNPKNSNSNLYSISSLSISSSPSPLPLHSPDPVKGNSLPINYPETPHLWKNSETDFMTNQREQLNHNSFAHVAPINTKAITSPSRTATPKLQRFPQTISMNLNMNSNGHSSATSTIQPSCLSLSNNDSLDHTDVTPTSSHNYDLDFAVGLENLGNSCYMNCIIQCILGTHELTQIFLDDSYAKHININSKLGSKGILAKYFARLVHMMYKEQVDGSKKIPISPIKFKLACGSVNSLFKTASQQDCQEFCQFLLDGLHEDLNQCGSNPPLKELSQEAEARREKLSLRIASSIEWERFLTTDFSVIVDLFQGQYASRLKCKVCSHTSTTYQPFTVLSIPIPKKNSRNNITIEDCFREFTKCENLEVDEQWLCPHCEKRQPSTKQLTITRLPRNLIVHLKRFDNLLNKNNDFVIYPFLLDLTPFWANDFDGVFPPGVNDDELPIRGQIPPFKYELYGVACHFGTLYGGHYTAYVKKGLKKGWLYFDDTKYKPVKNKADAINSNAYVLFYHRVYGV.

Positions S205 to V328 constitute a Rhodanese domain. Residue S443 is modified to Phosphoserine. A USP domain is found at V562–V923. C571 serves as the catalytic Nucleophile. H880 (proton acceptor) is an active-site residue.

It belongs to the peptidase C19 family. Interacts with BRO1, RFU1 and VPS32. Associates with the 26S proteasome.

Its subcellular location is the cytoplasm. It localises to the late endosome membrane. It catalyses the reaction Thiol-dependent hydrolysis of ester, thioester, amide, peptide and isopeptide bonds formed by the C-terminal Gly of ubiquitin (a 76-residue protein attached to proteins as an intracellular targeting signal).. RFU1 is an inhibitor of deubiquitination activity. Functionally, ubiquitin thioesterase that acts at the late endosome/prevacuolar compartment to recover ubiquitin from ubiquitinated membrane proteins en route to the vacuole. Also removes ubiquitin from soluble proteins targeted to proteasomes. Is essential to maintain a normal level of free ubiquitin. Involved in the ammonium-induced down-regulation of the GAP1 permease and the UME3 destruction in response to oxidative stress. Has a role in the RAD9 checkpoint response to TOP1 poisons. Required for promoting coordination of DNA replication and avoids DNA overreplication. The chain is Ubiquitin carboxyl-terminal hydrolase 4 (DOA4) from Saccharomyces cerevisiae (strain RM11-1a) (Baker's yeast).